Consider the following 259-residue polypeptide: tRNA pseudouridine synthase A (259 aa).

Residue Asp-52 is the Nucleophile of the active site. Position 113 (Tyr-113) interacts with substrate.

This sequence belongs to the tRNA pseudouridine synthase TruA family. In terms of assembly, homodimer.

The catalysed reaction is uridine(38/39/40) in tRNA = pseudouridine(38/39/40) in tRNA. In terms of biological role, formation of pseudouridine at positions 38, 39 and 40 in the anticodon stem and loop of transfer RNAs. This Allorhizobium ampelinum (strain ATCC BAA-846 / DSM 112012 / S4) (Agrobacterium vitis (strain S4)) protein is tRNA pseudouridine synthase A.